Consider the following 911-residue polypeptide: MQMMTRKVLLNMELEEDDDEDGDIVLENFDQTIVCPTFGSLENQQDFRTPEFEEFNGKPDSLFFTDGQRRIDFILVYEDESKKENNKKGTNEKQKRKRQAYESNLICHGLQLEATRSVSDDKLVFVKVHAPWEVLCTYAEIMHIKLPLKPNDLKTRSPFGNLNWFTKVLRVNESVIKPEQEFFTAPFEKSRMNDFYILDRDSFFNPATRSRIVYFILSRVKYQVMNNVNKFGINRLVSSGIYKAAFPLHDCRFNYESEDISCPSERYLLYREWAHPRSIYKKQPLDLIRKYYGEKIGIYFAWLGYYTQMLLLAAVVGVACFLYGYLDQDNCTWSKEVCDPDIGGQILMCPQCDRLCPFWRLNITCESSKKLCIFDSFGTLIFAVFMGVWVTLFLEFWKRRQAELEYEWDTVELQQEEQARPEYEAQCNHVVINEITQEEERIPFTTCGKCIRVTLCASAVFFWILLIIASVIGIIVYRLSVFIVFSTTLPKNPNGTDPIQKYLTPQMATSITASIISFIIIMILNTIYEKVAIMITNFELPRTQTDYENSLTMKMFLFQFVNYYSSCFYIAFFKGKFVGYPGDPVYLLGKYRSEECDPGGCLLELTTQLTIIMGGKAIWNNIQEVLLPWVMNLIGRYKRVSGSEKITPRWEQDYHLQPMGKLGLFYEYLEMIIQFGFVTLFVASFPLAPLLALVNNILEIRVDAWKLTTQFRRMVPEKAQDIGAWQPIMQGIAILAVVTNAMIIAFTSDMIPRLVYYWSFSIPPYGDHTYYTMDGYINNTLSVFNITDFKNTDKENPYIGLGNYTLCRYRDFRNPPGHPQEYKHNIYYWHVIAAKLAFIIVMEHIIYSVKFFISYAIPDVSKITKSKIKREKYLTQKLLHESHLKDLTKNMGIIAERIGGTVDNSVRPKLE.

Over 1–301 (MQMMTRKVLL…YGEKIGIYFA (301 aa)) the chain is Cytoplasmic. Residues 302–322 (WLGYYTQMLLLAAVVGVACFL) form a helical membrane-spanning segment. Topologically, residues 323-376 (YGYLDQDNCTWSKEVCDPDIGGQILMCPQCDRLCPFWRLNITCESSKKLCIFDS) are extracellular. An N-linked (GlcNAc...) asparagine glycan is attached at N330. 5 disulfide bridges follow: C331-C372, C338-C365, C349-C807, C352-C356, and C596-C601. Residue N362 is glycosylated (N-linked (GlcNAc...) asparagine). Residues 377–397 (FGTLIFAVFMGVWVTLFLEFW) form a helical membrane-spanning segment. The Cytoplasmic segment spans residues 398–456 (KRRQAELEYEWDTVELQQEEQARPEYEAQCNHVVINEITQEEERIPFTTCGKCIRVTLC). Residues 457–477 (ASAVFFWILLIIASVIGIIVY) traverse the membrane as a helical segment. The Extracellular segment spans residues 478–510 (RLSVFIVFSTTLPKNPNGTDPIQKYLTPQMATS). The N-linked (GlcNAc...) asparagine glycan is linked to N494. The helical transmembrane segment at 511–531 (ITASIISFIIIMILNTIYEKV) threads the bilayer. Residues 532-552 (AIMITNFELPRTQTDYENSLT) are Cytoplasmic-facing. The chain crosses the membrane as a helical span at residues 553 to 573 (MKMFLFQFVNYYSSCFYIAFF). Topologically, residues 574 to 602 (KGKFVGYPGDPVYLLGKYRSEECDPGGCL) are extracellular. Residues 603 to 622 (LELTTQLTIIMGGKAIWNNI) form a helical membrane-spanning segment. Over 623–664 (QEVLLPWVMNLIGRYKRVSGSEKITPRWEQDYHLQPMGKLGL) the chain is Cytoplasmic. Ca(2+) contacts are provided by E624, E667, and E670. 2 helical membrane passes run 665–685 (FYEY…VASF) and 686–706 (PLAP…DAWK). The Cytoplasmic segment spans residues 707–723 (LTTQFRRMVPEKAQDIG). The chain crosses the membrane as a helical span at residues 724 to 744 (AWQPIMQGIAILAVVTNAMII). Residues 745-837 (AFTSDMIPRL…YWHVIAAKLA (93 aa)) lie on the Extracellular side of the membrane. 3 N-linked (GlcNAc...) asparagine glycosylation sites follow: N778, N785, and N803. A helical transmembrane segment spans residues 838–858 (FIIVMEHIIYSVKFFISYAIP). Topologically, residues 859-911 (DVSKITKSKIKREKYLTQKLLHESHLKDLTKNMGIIAERIGGTVDNSVRPKLE) are cytoplasmic.

This sequence belongs to the anoctamin family. As to quaternary structure, homodimer. As to expression, predominant expression seen in epithelial tissues. Also found in skeletal system where it is primarily expressed in osteoblasts.

The protein resides in the cell membrane. It carries out the reaction a 1,2-diacyl-sn-glycero-3-phospho-L-serine(in) = a 1,2-diacyl-sn-glycero-3-phospho-L-serine(out). The enzyme catalyses a beta-D-galactosyl-(1&lt;-&gt;1')-N-acylsphing-4-enine(out) = a beta-D-galactosyl-(1&lt;-&gt;1')-N-acylsphing-4-enine(in). The catalysed reaction is a 1,2-diacyl-sn-glycero-3-phosphocholine(in) = a 1,2-diacyl-sn-glycero-3-phosphocholine(out). With respect to regulation, exhibits synergistic gating by Ca(2+) and voltage. Inhibited by some non-specific cation channel blockers such as: ruthenium red, 2-aminoethyl diphenylborinate (2APB), gadolinium and cadmium ions. Functionally, small-conductance calcium-activated nonselective cation (SCAN) channel which acts as a regulator of phospholipid scrambling in platelets, osteoblasts and fetal thymocytes. Phospholipid scrambling results in surface exposure of phosphatidylserine which in platelets is essential to trigger the clotting system whereas in osteoblasts is essential for the deposition of hydroxyapatite during bone mineralization. Has calcium-dependent phospholipid scramblase activity; scrambles phosphatidylserine, phosphatidylcholine and galactosylceramide. Can generate outwardly rectifying chloride channel currents in airway epithelial cells and Jurkat T lymphocytes. This is Anoctamin-6 (Ano6) from Mus musculus (Mouse).